The sequence spans 170 residues: Urease accessory protein UreE (170 aa).

It belongs to the UreE family.

It localises to the cytoplasm. Its function is as follows. Involved in urease metallocenter assembly. Binds nickel. Probably functions as a nickel donor during metallocenter assembly. This chain is Urease accessory protein UreE, found in Helicobacter acinonychis (strain Sheeba).